Consider the following 473-residue polypeptide: O-methyltransferase aclU (473 aa).

S-adenosyl-L-methionine contacts are provided by residues aspartate 320 and 354 to 356; that span reads GDF. Histidine 373 acts as the Proton acceptor in catalysis.

The protein belongs to the class I-like SAM-binding methyltransferase superfamily. Cation-independent O-methyltransferase family. COMT subfamily.

It participates in mycotoxin biosynthesis. In terms of biological role, O-methyltransferase; part of the gene cluster that mediates the biosynthesis of aspirochlorine (or antibiotic A30641), an unusual halogenated spiro compound with distinctive antifungal properties due to selective inhibition of protein biosynthesis, and which is also active against bacteria, viruses, and murine tumor cells. The non-ribosomal peptide synthetase (NRPS) aclP is responsible the formation of the diketopiperazine (DKP) core from the condensation of 2 phenylalanine residues. One Phe residue is tailored into chlorotyrosine by hydroxylation and chlorination, whereas the second Phe undergoes an unprecedented C-C bond cleavage to be converted into glycine. After formation of the DKP, sulfur is incorporated into the DKP by conjugation with glutathione by aclG, followed by its stepwise degradation to the thiol by aclI, aclJ and aclK, and the dithiol oxidation by aclT. In addition, oxygenases (aclB, aclC, aclL and aclO) and O-methyltransferases (aclM and aclU) act as tailoring enzymes to produce the intermediate dechloroaspirochlorine. Ultimately, chlorination of dechloroaspirochlorine by the halogenase aclH is the last step in the aspirochlorine pathway. The protein is O-methyltransferase aclU of Aspergillus oryzae (strain ATCC 42149 / RIB 40) (Yellow koji mold).